The chain runs to 400 residues: Lysophospholipid transporter LplT (400 aa).

Helical transmembrane passes span 19–39 (VIVA…ATLA), 53–73 (VLQM…GQIA), 91–111 (AGAA…LVGI), 139–159 (LMEA…GVLA), 164–184 (IAAL…NLFI), 227–247 (LFWG…PVAL), 257–277 (YLNA…AKLV), 281–301 (TVSR…IFSL), 304–324 (ALLP…FFVV), 352–372 (NSAM…GVPA), and 373–393 (VAIG…LWIW).

It belongs to the major facilitator superfamily. LplT (TC 2.A.1.42) family.

It is found in the cell inner membrane. Functionally, catalyzes the facilitated diffusion of 2-acyl-glycero-3-phosphoethanolamine (2-acyl-GPE) into the cell. This chain is Lysophospholipid transporter LplT, found in Salmonella gallinarum (strain 287/91 / NCTC 13346).